Reading from the N-terminus, the 245-residue chain is 3-deoxy-manno-octulosonate cytidylyltransferase (245 aa).

It belongs to the KdsB family.

Its subcellular location is the cytoplasm. The catalysed reaction is 3-deoxy-alpha-D-manno-oct-2-ulosonate + CTP = CMP-3-deoxy-beta-D-manno-octulosonate + diphosphate. Its pathway is nucleotide-sugar biosynthesis; CMP-3-deoxy-D-manno-octulosonate biosynthesis; CMP-3-deoxy-D-manno-octulosonate from 3-deoxy-D-manno-octulosonate and CTP: step 1/1. The protein operates within bacterial outer membrane biogenesis; lipopolysaccharide biosynthesis. Its function is as follows. Activates KDO (a required 8-carbon sugar) for incorporation into bacterial lipopolysaccharide in Gram-negative bacteria. The sequence is that of 3-deoxy-manno-octulosonate cytidylyltransferase from Desulfatibacillum aliphaticivorans.